A 157-amino-acid chain; its full sequence is Ribosomal RNA large subunit methyltransferase H (157 aa).

Residues Leu-75, Gly-106, and 125 to 130 contribute to the S-adenosyl-L-methionine site; that span reads FSELTF.

The protein belongs to the RNA methyltransferase RlmH family. In terms of assembly, homodimer.

The protein localises to the cytoplasm. It carries out the reaction pseudouridine(1915) in 23S rRNA + S-adenosyl-L-methionine = N(3)-methylpseudouridine(1915) in 23S rRNA + S-adenosyl-L-homocysteine + H(+). Specifically methylates the pseudouridine at position 1915 (m3Psi1915) in 23S rRNA. The chain is Ribosomal RNA large subunit methyltransferase H from Malacoplasma penetrans (strain HF-2) (Mycoplasma penetrans).